The following is a 387-amino-acid chain: Phosphoglycerate kinase (387 aa).

Substrate contacts are provided by residues 21-23, arginine 36, 59-62, arginine 113, and arginine 146; these read DLN and HLGR. ATP is bound by residues lysine 197, glutamate 314, and 340–343; that span reads GGDT.

The protein belongs to the phosphoglycerate kinase family. As to quaternary structure, monomer.

Its subcellular location is the cytoplasm. It catalyses the reaction (2R)-3-phosphoglycerate + ATP = (2R)-3-phospho-glyceroyl phosphate + ADP. It participates in carbohydrate degradation; glycolysis; pyruvate from D-glyceraldehyde 3-phosphate: step 2/5. The protein is Phosphoglycerate kinase of Pseudomonas putida (strain ATCC 700007 / DSM 6899 / JCM 31910 / BCRC 17059 / LMG 24140 / F1).